We begin with the raw amino-acid sequence, 407 residues long: ADDKNPLEECFREDDHRIVREYIRKFGLKLNEFVQETENGWYFIKNIRKRVGEVKKDPGLLKYPVKPSEAGKSAGQLYQESLGKAVEELKRTNCSYILNKYDTYSTKEYLIKEGNLSPGAVDMIGDLLNEDSGYYVSFIESLKHDDIFAYEKRFDEIVGGMDQLPTSMYRAIEESVRFKARVIKIQQNAEKVTVTYQTTQKNLLLETVDYVIVCTTSRAARRITFKPPLPPKKAHALRSVHYRSGTKIFLTCTKKFWEDDGIQGGKSTTDLPSRFIYYPNHNFTTGVGVIIAYGIGDDANFFQALNLNECADIVFNDLSSIHQLPKKDLQTFCYPSIIQKWSLDKYAMGAITTFTPYQFQHFSEALTAPVGRIFFAGEYTANAHGWIDSTIKSGLTAARDVNRASEL.

C10 and C94 form a disulfide bridge. The N-linked (GlcNAc...) asparagine glycan is linked to N93. A substrate-binding site is contributed by H144. V182 contacts FAD. C252 and C333 form a disulfide bridge. N282 carries an N-linked (GlcNAc...) asparagine glycan. Substrate is bound at residue Y293. Residues E378 and 385 to 390 (GWIDST) each bind FAD. 385 to 386 (GW) is a substrate binding site.

It belongs to the flavin monoamine oxidase family. FIG1 subfamily. In terms of assembly, homodimer; non-covalently linked. The cofactor is FAD. As to expression, expressed by the venom gland.

The protein resides in the secreted. It carries out the reaction an L-alpha-amino acid + O2 + H2O = a 2-oxocarboxylate + H2O2 + NH4(+). The catalysed reaction is L-leucine + O2 + H2O = 4-methyl-2-oxopentanoate + H2O2 + NH4(+). The enzyme catalyses L-phenylalanine + O2 + H2O = 3-phenylpyruvate + H2O2 + NH4(+). It catalyses the reaction L-isoleucine + O2 + H2O = (S)-3-methyl-2-oxopentanoate + H2O2 + NH4(+). It carries out the reaction L-aspartate + O2 + H2O = oxaloacetate + H2O2 + NH4(+). The catalysed reaction is L-lysine + O2 + H2O = 6-amino-2-oxohexanoate + H2O2 + NH4(+). The enzyme catalyses L-glutamate + O2 + H2O = H2O2 + 2-oxoglutarate + NH4(+). Its function is as follows. Catalyzes an oxidative deamination of predominantly hydrophobic and aromatic L-amino acids, thus producing hydrogen peroxide that may contribute to the diverse toxic effects of this enzyme. Is highly active on L-Leu followed by L-Phe and L-Ile, moderately active on L-Asp, L-Glu, and L-Lys, and not active on L-Pro, L-Asn, L-Gly, L-Ser and L-Cys. Exhibits diverse biological activities such as antibacterial activity (Minimal inhibitory concentrations (MIC) are 9.0 ug/ml against S.aureus, 144.0 ug/ml against P.aeruginosa and 288.0 ug/ml against E.coli) and inhibition of ADP- and TMVA-induced platelet aggregation. Effects of snake L-amino oxidases on platelets are controversial, since they either induce aggregation or inhibit agonist-induced aggregation. These different effects are probably due to different experimental conditions. Unlike other snake venom L-amino acid oxidases, does not induce hemorrhage. This protein may also induce hemolysis, edema, apoptosis and have antiparasitic activities. The sequence is that of L-amino-acid oxidase from Daboia siamensis (Eastern Russel's viper).